The following is a 405-amino-acid chain: Solute carrier family 35 member E2A (405 aa).

Positions 1–22 are disordered; that stretch reads MSAAAKSQVPEEAAPGCEEEPK. Helical transmembrane passes span 76–96, 106–126, 142–162, 167–187, 195–215, 219–241, 264–284, 296–316, 326–346, and 347–367; these read LIYL…NKYI, MLGA…IFVP, FIMT…LGLV, VAVS…VIMS, TGLL…LCTA, SFNI…QNVF, AAAV…PVIG, IVLL…TAYA, FSVA…IVFG, and NKIT…VLLY. The tract at residues 380–405 is disordered; it reads SLVTATSRNPEDDTEPLVPQDSRQHH.

Belongs to the TPT transporter family. SLC35E subfamily.

It is found in the membrane. Its function is as follows. Putative transporter. This is Solute carrier family 35 member E2A (Slc35e2a) from Mus musculus (Mouse).